A 438-amino-acid chain; its full sequence is Enolase (438 aa).

Substrate-binding residues include His-159 and Glu-168. The Proton donor role is filled by Glu-211. Mg(2+) contacts are provided by Asp-246, Glu-297, and Asp-322. Substrate-binding residues include Glu-297 and Asp-322. The active-site Proton acceptor is Lys-347. Substrate is bound by residues 374-377 (SHRS) and Lys-398.

The protein belongs to the enolase family. Homodimer. The cofactor is Mg(2+).

Its subcellular location is the cytoplasm. The enzyme catalyses (2R)-2-phosphoglycerate = phosphoenolpyruvate + H2O. Its pathway is carbohydrate degradation; glycolysis; pyruvate from D-glyceraldehyde 3-phosphate: step 4/5. This Penicillium citrinum protein is Enolase (enoA).